Consider the following 277-residue polypeptide: MKKAPAGSFPAKPTIAPERPILVFDSGIGGLTVLREARVVMPDRRFVYIADDAGFPYGNWEEEALKRRIIELFGEFIANYDPEIAVIACNTASTLVLEDLRRAYPSVPFVGTVPAIKPAAERTSSGLVSVLATPGTVKRAYTRDLIQSFASRCHVRLVGVDGLAAIAEAHIRGESFDEALVMAQIAPCFIEKGGKRTDIVVLACTHYPFLVNVLRRLAPWPVDWLDPAEAIARRMKSLLPARSDDDEFHSQDDLAFFTSRKPDYAIRRLMQGFGLRF.

Residues 25–26 (DS) and 57–58 (YG) each bind substrate. The Proton donor/acceptor role is filled by Cys89. Substrate is bound at residue 90 to 91 (NT). The Proton donor/acceptor role is filled by Cys204. Substrate is bound at residue 205 to 206 (TH).

The protein belongs to the aspartate/glutamate racemases family.

The enzyme catalyses L-glutamate = D-glutamate. It functions in the pathway cell wall biogenesis; peptidoglycan biosynthesis. Functionally, provides the (R)-glutamate required for cell wall biosynthesis. This Brucella ovis (strain ATCC 25840 / 63/290 / NCTC 10512) protein is Glutamate racemase.